The following is a 604-amino-acid chain: Glutamine--fructose-6-phosphate aminotransferase [isomerizing] (604 aa).

Cys2 acts as the Nucleophile; for GATase activity in catalysis. The 218-residue stretch at 2–219 (CGIMGAVSER…EGDSACVTTQ (218 aa)) folds into the Glutamine amidotransferase type-2 domain. 2 consecutive SIS domains span residues 279-427 (LRAS…DNRA) and 454-594 (LASL…VDQP). Lys599 serves as the catalytic For Fru-6P isomerization activity.

Homodimer.

Its subcellular location is the cytoplasm. It carries out the reaction D-fructose 6-phosphate + L-glutamine = D-glucosamine 6-phosphate + L-glutamate. Functionally, catalyzes the first step in hexosamine metabolism, converting fructose-6P into glucosamine-6P using glutamine as a nitrogen source. The chain is Glutamine--fructose-6-phosphate aminotransferase [isomerizing] from Legionella pneumophila (strain Paris).